A 285-amino-acid polypeptide reads, in one-letter code: tRNA pseudouridine synthase A (285 aa).

Catalysis depends on Asp-69, which acts as the Nucleophile. Tyr-127 serves as a coordination point for substrate.

Belongs to the tRNA pseudouridine synthase TruA family. As to quaternary structure, homodimer.

The enzyme catalyses uridine(38/39/40) in tRNA = pseudouridine(38/39/40) in tRNA. Formation of pseudouridine at positions 38, 39 and 40 in the anticodon stem and loop of transfer RNAs. This Pseudomonas aeruginosa (strain ATCC 15692 / DSM 22644 / CIP 104116 / JCM 14847 / LMG 12228 / 1C / PRS 101 / PAO1) protein is tRNA pseudouridine synthase A.